The following is a 215-amino-acid chain: Thymidylate kinase (215 aa).

11–18 is a binding site for ATP; sequence GIDGAGKS.

Belongs to the thymidylate kinase family.

The catalysed reaction is dTMP + ATP = dTDP + ADP. Phosphorylation of dTMP to form dTDP in both de novo and salvage pathways of dTTP synthesis. This Nitrosomonas eutropha (strain DSM 101675 / C91 / Nm57) protein is Thymidylate kinase.